The sequence spans 315 residues: L-lactate dehydrogenase (315 aa).

V14, D35, and Y66 together coordinate NAD(+). Substrate contacts are provided by residues Q83, R89, and 121 to 124 (NPVD). NAD(+) contacts are provided by residues 119–121 (VAN) and S144. 149 to 152 (DTAR) lines the substrate pocket. The active-site Proton acceptor is the H176. Residue Y221 is modified to Phosphotyrosine. Position 230 (T230) interacts with substrate.

Belongs to the LDH/MDH superfamily. LDH family. As to quaternary structure, homotetramer.

Its subcellular location is the cytoplasm. The catalysed reaction is (S)-lactate + NAD(+) = pyruvate + NADH + H(+). Its pathway is fermentation; pyruvate fermentation to lactate; (S)-lactate from pyruvate: step 1/1. In terms of biological role, catalyzes the conversion of lactate to pyruvate. The polypeptide is L-lactate dehydrogenase (Mesomycoplasma hyopneumoniae (strain 7448) (Mycoplasma hyopneumoniae)).